The chain runs to 319 residues: Cobalamin biosynthesis protein CbiB (319 aa).

5 helical membrane passes run 56-76 (VMWVVVVGATWGVAWGVLALA), 82-102 (WFGWSVEVWMIFTTLAGRSLA), 153-173 (VDGIIAPLFFLFLGGAPLAMA), 204-224 (VANYLPARLSWLLLGIAAGLC), and 296-316 (LMWVASTLALALFIAARCGLS).

It belongs to the CobD/CbiB family.

Its subcellular location is the cell membrane. The protein operates within cofactor biosynthesis; adenosylcobalamin biosynthesis. In terms of biological role, converts cobyric acid to cobinamide by the addition of aminopropanol on the F carboxylic group. However, the true cosubstrate could be (R)-1-amino-2-propanol O-2-phosphate, leading to cobinamide phosphate. This Salmonella choleraesuis (strain SC-B67) protein is Cobalamin biosynthesis protein CbiB.